The chain runs to 389 residues: ATP-dependent (S)-NAD(P)H-hydrate dehydratase (389 aa).

Residues 53 to 389 form the YjeF C-terminal domain; that stretch reads TLQLVRNIIP…RGGGRLPQAL (337 aa). Phosphotyrosine is present on Y85. (6S)-NADPHX-binding positions include E153 and 205–211; that span reads NHMEFSR. ATP is bound by residues 245–249 and 264–273; these read KGERD and GSSRRCGGQG. (6S)-NADPHX is bound at residue D274. Disordered regions lie at residues 316 to 350 and 369 to 389; these read KTRA…PGGC and RSLH…PQAL.

The protein belongs to the NnrD/CARKD family. Mg(2+) serves as cofactor.

It localises to the mitochondrion. It carries out the reaction (6S)-NADHX + ATP = ADP + phosphate + NADH + H(+). The enzyme catalyses (6S)-NADPHX + ATP = ADP + phosphate + NADPH + H(+). Its function is as follows. Catalyzes the dehydration of the S-form of NAD(P)HX at the expense of ATP, which is converted to ADP. Together with NAD(P)HX epimerase, which catalyzes the epimerization of the S- and R-forms, the enzyme allows the repair of both epimers of NAD(P)HX, a damaged form of NAD(P)H that is a result of enzymatic or heat-dependent hydration. The protein is ATP-dependent (S)-NAD(P)H-hydrate dehydratase of Macaca mulatta (Rhesus macaque).